The chain runs to 222 residues: N-(5'-phosphoribosyl)anthranilate isomerase (222 aa).

It belongs to the TrpF family.

The enzyme catalyses N-(5-phospho-beta-D-ribosyl)anthranilate = 1-(2-carboxyphenylamino)-1-deoxy-D-ribulose 5-phosphate. It participates in amino-acid biosynthesis; L-tryptophan biosynthesis; L-tryptophan from chorismate: step 3/5. In Beijerinckia indica subsp. indica (strain ATCC 9039 / DSM 1715 / NCIMB 8712), this protein is N-(5'-phosphoribosyl)anthranilate isomerase.